Here is an 83-residue protein sequence, read N- to C-terminus: MVVIRLARGGAKKRPFYQIVVTDSRNARDGRFIERIGFFNPTAQGQAEKLRLDADRFAHWVSQGAQPSERVASLAAQAKKATA.

The protein belongs to the bacterial ribosomal protein bS16 family.

This Acinetobacter baumannii (strain AB307-0294) protein is Small ribosomal subunit protein bS16.